A 954-amino-acid polypeptide reads, in one-letter code: Glycine dehydrogenase (decarboxylating) (954 aa).

N6-(pyridoxal phosphate)lysine is present on Lys-704.

It belongs to the GcvP family. As to quaternary structure, the glycine cleavage system is composed of four proteins: P, T, L and H. It depends on pyridoxal 5'-phosphate as a cofactor.

It catalyses the reaction N(6)-[(R)-lipoyl]-L-lysyl-[glycine-cleavage complex H protein] + glycine + H(+) = N(6)-[(R)-S(8)-aminomethyldihydrolipoyl]-L-lysyl-[glycine-cleavage complex H protein] + CO2. Functionally, the glycine cleavage system catalyzes the degradation of glycine. The P protein binds the alpha-amino group of glycine through its pyridoxal phosphate cofactor; CO(2) is released and the remaining methylamine moiety is then transferred to the lipoamide cofactor of the H protein. In Allorhizobium ampelinum (strain ATCC BAA-846 / DSM 112012 / S4) (Agrobacterium vitis (strain S4)), this protein is Glycine dehydrogenase (decarboxylating).